Reading from the N-terminus, the 120-residue chain is NAD(P)H-quinone oxidoreductase subunit 3, chloroplastic (120 aa).

The next 3 membrane-spanning stretches (helical) occupy residues 9-29 (IFWAFLIISSFIPILAFLISG), 64-84 (MFALIFVVFDVETVFLYPWAM), and 88-108 (VLGVSVFIEAFIFVLILIVGS).

This sequence belongs to the complex I subunit 3 family. As to quaternary structure, NDH is composed of at least 16 different subunits, 5 of which are encoded in the nucleus.

The protein resides in the plastid. It localises to the chloroplast thylakoid membrane. It catalyses the reaction a plastoquinone + NADH + (n+1) H(+)(in) = a plastoquinol + NAD(+) + n H(+)(out). It carries out the reaction a plastoquinone + NADPH + (n+1) H(+)(in) = a plastoquinol + NADP(+) + n H(+)(out). In terms of biological role, NDH shuttles electrons from NAD(P)H:plastoquinone, via FMN and iron-sulfur (Fe-S) centers, to quinones in the photosynthetic chain and possibly in a chloroplast respiratory chain. The immediate electron acceptor for the enzyme in this species is believed to be plastoquinone. Couples the redox reaction to proton translocation, and thus conserves the redox energy in a proton gradient. The sequence is that of NAD(P)H-quinone oxidoreductase subunit 3, chloroplastic from Glycine max (Soybean).